The chain runs to 454 residues: Bifunctional protein GlmU (454 aa).

The interval 1 to 225 (MNIVILAAGM…LWETLGVNSK (225 aa)) is pyrophosphorylase. UDP-N-acetyl-alpha-D-glucosamine is bound by residues 6-9 (LAAG), K20, Q71, 76-77 (GT), 98-100 (YGD), G135, E150, N165, and N223. Residue D100 participates in Mg(2+) binding. Position 223 (N223) interacts with Mg(2+). Residues 226–246 (VQLAEVERIHQRNLAQRLLET) are linker. An N-acetyltransferase region spans residues 247-454 (GVTLADPARI…WQRPVKKAKQ (208 aa)). UDP-N-acetyl-alpha-D-glucosamine is bound by residues R329 and K347. The active-site Proton acceptor is the H359. UDP-N-acetyl-alpha-D-glucosamine is bound by residues Y362 and N373. Acetyl-CoA contacts are provided by residues A376, 382–383 (NY), S401, A419, and R436.

The protein in the N-terminal section; belongs to the N-acetylglucosamine-1-phosphate uridyltransferase family. It in the C-terminal section; belongs to the transferase hexapeptide repeat family. As to quaternary structure, homotrimer. Mg(2+) is required as a cofactor.

Its subcellular location is the cytoplasm. It catalyses the reaction alpha-D-glucosamine 1-phosphate + acetyl-CoA = N-acetyl-alpha-D-glucosamine 1-phosphate + CoA + H(+). It carries out the reaction N-acetyl-alpha-D-glucosamine 1-phosphate + UTP + H(+) = UDP-N-acetyl-alpha-D-glucosamine + diphosphate. It participates in nucleotide-sugar biosynthesis; UDP-N-acetyl-alpha-D-glucosamine biosynthesis; N-acetyl-alpha-D-glucosamine 1-phosphate from alpha-D-glucosamine 6-phosphate (route II): step 2/2. It functions in the pathway nucleotide-sugar biosynthesis; UDP-N-acetyl-alpha-D-glucosamine biosynthesis; UDP-N-acetyl-alpha-D-glucosamine from N-acetyl-alpha-D-glucosamine 1-phosphate: step 1/1. The protein operates within bacterial outer membrane biogenesis; LPS lipid A biosynthesis. Catalyzes the last two sequential reactions in the de novo biosynthetic pathway for UDP-N-acetylglucosamine (UDP-GlcNAc). The C-terminal domain catalyzes the transfer of acetyl group from acetyl coenzyme A to glucosamine-1-phosphate (GlcN-1-P) to produce N-acetylglucosamine-1-phosphate (GlcNAc-1-P), which is converted into UDP-GlcNAc by the transfer of uridine 5-monophosphate (from uridine 5-triphosphate), a reaction catalyzed by the N-terminal domain. The polypeptide is Bifunctional protein GlmU (Cupriavidus pinatubonensis (strain JMP 134 / LMG 1197) (Cupriavidus necator (strain JMP 134))).